A 161-amino-acid chain; its full sequence is RNA pyrophosphohydrolase (161 aa).

Positions 12–154 (PYRPGVGMMI…KRKLYQAVVK (143 aa)) constitute a Nudix hydrolase domain. A Nudix box motif is present at residues 46-67 (GGIVPGETPSIAAMREMLEEIG).

It belongs to the Nudix hydrolase family. RppH subfamily. Requires a divalent metal cation as cofactor.

Its function is as follows. Accelerates the degradation of transcripts by removing pyrophosphate from the 5'-end of triphosphorylated RNA, leading to a more labile monophosphorylated state that can stimulate subsequent ribonuclease cleavage. This is RNA pyrophosphohydrolase from Rickettsia peacockii (strain Rustic).